A 673-amino-acid chain; its full sequence is Probable multidrug resistance ABC transporter ATP-binding/permease protein YheH (673 aa).

5 consecutive transmembrane segments (helical) span residues 18–38, 146–166, 223–243, 245–265, and 347–367; these read LITA…GPFI, IKGM…SVFF, LYVT…GIFT, LFLL…IIWL, and LAFV…AGIV. Residues 18-398 enclose the ABC transmembrane type-1 domain; it reads LITAVLLLTV…IVNQFSKLEL (381 aa). Residues 430–664 form the ABC transporter domain; sequence VEFRDVSFAY…EGQYYQMYEL (235 aa). Residue 463–470 participates in ATP binding; that stretch reads GHTGSGKS.

This sequence belongs to the ABC transporter superfamily. Heterodimer composed of YheH and YheI.

The protein resides in the cell membrane. Its activity is regulated as follows. Inhibited by ortho-vanadate. In terms of biological role, involved in the transport of four structurally unrelated drugs, including doxorubicin and mitoxantrone. Transmembrane domains (TMD) form a pore in the membrane and the ATP-binding domain (NBD) is responsible for energy generation. The sequence is that of Probable multidrug resistance ABC transporter ATP-binding/permease protein YheH (yheH) from Bacillus subtilis (strain 168).